The sequence spans 1544 residues: Lysophospholipase NTE1 (1544 aa).

The Cytoplasmic segment spans residues 1-37 (MSTIEIVSTVAEYTEIHSPVSSKFLLPSARDSSSSIS). Residues 38–58 (LFSAIFWFWSWLFFKIMNIFL) form a helical membrane-spanning segment. Topologically, residues 59-76 (YYIPNIIVNLFSVNFQIT) are lumenal. A helical transmembrane segment spans residues 77-97 (LSLSSIVITLTGIISFCFLIV). The Cytoplasmic segment spans residues 98-1544 (RYKYLTRYSK…RKSLYRRSSI (1447 aa)). Disordered stretches follow at residues 265–312 (RLFS…RNYP) and 424–552 (ESPS…EETE). Over residues 275-310 (NPASNPLSPDNTGSKSFDPLSSGNFNDTSLSSSDRN) the composition is skewed to polar residues. Over residues 425-447 (SPSVSINKTSSSSSSLPKKSTTS) the composition is skewed to low complexity. Composition is skewed to polar residues over residues 448-458 (LRPLNRNQSSR) and 517-536 (QISS…TTKF). A compositionally biased stretch (basic and acidic residues) spans 537–546 (ENIRDRTFSD). A nucleoside 3',5'-cyclic phosphate-binding positions include 681–811 (SFES…LKSL) and 807–960 (KLKS…VANK). Residues 1237–1401 (LVLGGGGSRG…LDNLPVMEMK (165 aa)) enclose the PNPLA domain. The GXGXXG signature appears at 1241-1246 (GGGSRG). A GXSXG motif is present at residues 1268–1272 (GTSIG). Catalysis depends on serine 1270, which acts as the Nucleophile. Residue aspartate 1388 is the Proton acceptor of the active site. A DGA/G motif is present at residues 1388 to 1390 (DGG).

Belongs to the NTE family.

It localises to the endoplasmic reticulum membrane. It carries out the reaction a 1-acyl-sn-glycero-3-phosphocholine + H2O = sn-glycerol 3-phosphocholine + a fatty acid + H(+). With respect to regulation, inhibited by organophosphorus esters. Functionally, intracellular phospholipase B that catalyzes the double deacylation of phosphatidylcholine (PC) to glycerophosphocholine (GroPCho). Plays an important role in membrane lipid homeostasis. Responsible for the rapid PC turnover in response to inositol, elevated temperatures, or when choline is present in the growth medium. In Debaryomyces hansenii (strain ATCC 36239 / CBS 767 / BCRC 21394 / JCM 1990 / NBRC 0083 / IGC 2968) (Yeast), this protein is Lysophospholipase NTE1 (NTE1).